A 278-amino-acid polypeptide reads, in one-letter code: Elongation factor Ts (278 aa).

Residues 80 to 83 form an involved in Mg(2+) ion dislocation from EF-Tu region; sequence TDFV.

The protein belongs to the EF-Ts family.

The protein resides in the cytoplasm. Its function is as follows. Associates with the EF-Tu.GDP complex and induces the exchange of GDP to GTP. It remains bound to the aminoacyl-tRNA.EF-Tu.GTP complex up to the GTP hydrolysis stage on the ribosome. In Paenarthrobacter aurescens (strain TC1), this protein is Elongation factor Ts.